A 102-amino-acid chain; its full sequence is UPF0058 protein MTH_224 (102 aa).

Belongs to the UPF0058 family.

This is UPF0058 protein MTH_224 from Methanothermobacter thermautotrophicus (strain ATCC 29096 / DSM 1053 / JCM 10044 / NBRC 100330 / Delta H) (Methanobacterium thermoautotrophicum).